The sequence spans 130 residues: Small ribosomal subunit protein uS11c (130 aa).

This sequence belongs to the universal ribosomal protein uS11 family. As to quaternary structure, part of the 30S ribosomal subunit.

The protein resides in the plastid. Its subcellular location is the chloroplast. The chain is Small ribosomal subunit protein uS11c from Pyropia yezoensis (Susabi-nori).